Here is a 347-residue protein sequence, read N- to C-terminus: Protein-glutamate methylesterase/protein-glutamine glutaminase (347 aa).

A Response regulatory domain is found at 3-119 (EALVVDDSHF…STELSGHSEE (117 aa)). Asp-53 is subject to 4-aspartylphosphate. The tract at residues 132 to 154 (PTAGHDVEMEPASPPDATTSEYA) is disordered. A CheB-type methylesterase domain is found at 152 to 346 (EYADNPTLLI…EAIADSIRRT (195 aa)). Active-site residues include Ser-164, His-191, and Asp-288.

Belongs to the CheB family. Post-translationally, phosphorylated by CheA. Phosphorylation of the N-terminal regulatory domain activates the methylesterase activity.

Its subcellular location is the cytoplasm. The catalysed reaction is [protein]-L-glutamate 5-O-methyl ester + H2O = L-glutamyl-[protein] + methanol + H(+). The enzyme catalyses L-glutaminyl-[protein] + H2O = L-glutamyl-[protein] + NH4(+). Involved in the modulation of the chemotaxis system; catalyzes the demethylation of specific methylglutamate residues introduced into the Htr transducer proteins (methyl-accepting chemotaxis proteins) by CheR. Also required for Htr deamidations, at least at a specific glutamine-glutamate pair in HTR-II and a specific aspartate-glutamine pair in Htr4. The protein is Protein-glutamate methylesterase/protein-glutamine glutaminase of Halobacterium salinarum (strain ATCC 29341 / DSM 671 / R1).